Here is a 510-residue protein sequence, read N- to C-terminus: Holliday junction branch migration ATPase PINA (510 aa).

As to quaternary structure, homohexamer. Interacts with Holliday junction resolvase Hjc, interacts with helicase Hjm (Hel308).

The catalysed reaction is ATP + H2O = ADP + phosphate + H(+). In terms of biological role, important for growth at low temperatures (less than 65 degrees Celsius in this organism). Promotes Holliday junction (HJ) branch migration and unwinds Y-shaped DNA (but not replication forks or dsDNA) in an ATP hydrolysis-dependent manner. Stimulates cleavage by HJ resolvase Hjc. Hjc, Hjm (Hel308) and PINA coordinate HJ migration and cleavage of replication forks in a coordinated way. Probably acts as an ATP-dependent pump that pulls DNA through the hexamer. The polypeptide is Holliday junction branch migration ATPase PINA (Sulfolobus acidocaldarius (strain ATCC 33909 / DSM 639 / JCM 8929 / NBRC 15157 / NCIMB 11770)).